Consider the following 393-residue polypeptide: Phosphoglycerate kinase (393 aa).

Residues 21-23 (DMN), arginine 36, 59-62 (HLGR), arginine 114, and arginine 147 each bind substrate. Residues lysine 198, glutamate 320, and 346–349 (GGDT) contribute to the ATP site.

It belongs to the phosphoglycerate kinase family. As to quaternary structure, monomer.

Its subcellular location is the cytoplasm. The enzyme catalyses (2R)-3-phosphoglycerate + ATP = (2R)-3-phospho-glyceroyl phosphate + ADP. It participates in carbohydrate degradation; glycolysis; pyruvate from D-glyceraldehyde 3-phosphate: step 2/5. The sequence is that of Phosphoglycerate kinase from Thiobacillus denitrificans (strain ATCC 25259 / T1).